Reading from the N-terminus, the 160-residue chain is Cyclic di-GMP-binding protein Smlt4090 (160 aa).

3',3'-c-di-GMP-binding residues include K33, K132, R134, D135, and D160.

Belongs to the YajQ family.

Functionally, cyclic di-GMP effector that significantly contributes to virulence. Binds bis-(3',5')-cyclic diguanylate (cyclic di-GMP or c-di-GMP), an important bacterial second messenger that controls a wide range of cellular processes. The chain is Cyclic di-GMP-binding protein Smlt4090 from Stenotrophomonas maltophilia (strain K279a).